A 310-amino-acid chain; its full sequence is MEAPPEHCPGVESEQAGRVSACAGCPNQSICSDPNKKLEDPGKALVAAALKDVKHKLLILSGKGGVGKSTVTTLLTRYLARSCPDNNFGVLDIDICGPSQPRLLGAVGENVHQSGSGWSPVGIDDNVCLMSIGFLLGSVDDAIIWRGPKKNGMIRQFLSEVDWGNLDLLLLDTPPGTSDEHLSVVSYLKNDEIPNSVRAIIVTTPQEVALLDVRKEINFCKKQGIPIVGVVENMSSFRCGHCGNSSEIFPAKTGGAAAMCTEMEVPLLGSLPLDPLIAKACDSGEDITAMKNPTTEALAAICTRIMDSFN.

[4Fe-4S] cluster contacts are provided by Cys-8, Cys-22, Cys-25, and Cys-31. ATP is bound at residue 62–69 (GKGGVGKS). Residues Cys-239 and Cys-242 each contribute to the [4Fe-4S] cluster site.

The protein belongs to the Mrp/NBP35 ATP-binding proteins family. NUBP1/NBP35 subfamily. As to quaternary structure, heterotetramer of 2 Nubp1 and 2 Nubp2 chains. [4Fe-4S] cluster serves as cofactor.

Its subcellular location is the cytoplasm. Component of the cytosolic iron-sulfur (Fe/S) protein assembly (CIA) machinery. Required for maturation of extramitochondrial Fe-S proteins. The Nubp1-Nubp2 heterotetramer forms a Fe-S scaffold complex, mediating the de novo assembly of an Fe-S cluster and its transfer to target apoproteins. This chain is Cytosolic Fe-S cluster assembly factor Nubp1 homolog, found in Drosophila willistoni (Fruit fly).